The primary structure comprises 326 residues: uncharacterized protein (326 aa).

Positions Val-15–Glu-76 constitute an S4 RNA-binding domain. Residue Asp-147 is part of the active site.

The protein belongs to the pseudouridine synthase RluA family.

It carries out the reaction a uridine in RNA = a pseudouridine in RNA. This is an uncharacterized protein from Mycoplasma pneumoniae (strain ATCC 29342 / M129 / Subtype 1) (Mycoplasmoides pneumoniae).